The following is a 209-amino-acid chain: Large ribosomal subunit protein uL3 (209 aa).

The disordered stretch occupies residues 128–166 (FGGGSRTHGQSDRLRAPGSVGGSSDPSRTFKGTRMAGRM).

The protein belongs to the universal ribosomal protein uL3 family. As to quaternary structure, part of the 50S ribosomal subunit. Forms a cluster with proteins L14 and L19.

One of the primary rRNA binding proteins, it binds directly near the 3'-end of the 23S rRNA, where it nucleates assembly of the 50S subunit. The chain is Large ribosomal subunit protein uL3 from Chlorobaculum parvum (strain DSM 263 / NCIMB 8327) (Chlorobium vibrioforme subsp. thiosulfatophilum).